A 401-amino-acid chain; its full sequence is Imidazolonepropionase (401 aa).

His-66 and His-68 together coordinate Fe(3+). Zn(2+) is bound by residues His-66 and His-68. Residues Arg-75, Tyr-138, and His-171 each coordinate 4-imidazolone-5-propanoate. Tyr-138 serves as a coordination point for N-formimidoyl-L-glutamate. A Fe(3+)-binding site is contributed by His-236. His-236 is a binding site for Zn(2+). Residue Gln-239 coordinates 4-imidazolone-5-propanoate. Asp-311 provides a ligand contact to Fe(3+). Asp-311 serves as a coordination point for Zn(2+). Asn-313 and Gly-315 together coordinate N-formimidoyl-L-glutamate. Thr-316 serves as a coordination point for 4-imidazolone-5-propanoate.

It belongs to the metallo-dependent hydrolases superfamily. HutI family. The cofactor is Zn(2+). It depends on Fe(3+) as a cofactor.

The protein localises to the cytoplasm. It catalyses the reaction 4-imidazolone-5-propanoate + H2O = N-formimidoyl-L-glutamate. The protein operates within amino-acid degradation; L-histidine degradation into L-glutamate; N-formimidoyl-L-glutamate from L-histidine: step 3/3. Functionally, catalyzes the hydrolytic cleavage of the carbon-nitrogen bond in imidazolone-5-propanoate to yield N-formimidoyl-L-glutamate. It is the third step in the universal histidine degradation pathway. This chain is Imidazolonepropionase, found in Pseudomonas putida (strain GB-1).